The chain runs to 385 residues: DNA replication and repair protein RecF (385 aa).

An ATP-binding site is contributed by 30 to 37 (GPNGNGKT).

This sequence belongs to the RecF family.

Its subcellular location is the cytoplasm. The RecF protein is involved in DNA metabolism; it is required for DNA replication and normal SOS inducibility. RecF binds preferentially to single-stranded, linear DNA. It also seems to bind ATP. The chain is DNA replication and repair protein RecF from Mycobacterium leprae (strain Br4923).